The following is a 127-amino-acid chain: uncharacterized protein (127 aa).

This is an uncharacterized protein from Rickettsia conorii (strain ATCC VR-613 / Malish 7).